Consider the following 278-residue polypeptide: 4-deoxy-L-threo-5-hexosulose-uronate ketol-isomerase (278 aa).

Zn(2+) is bound by residues histidine 196, histidine 198, glutamate 203, and histidine 245.

This sequence belongs to the KduI family. Requires Zn(2+) as cofactor.

It catalyses the reaction 5-dehydro-4-deoxy-D-glucuronate = 3-deoxy-D-glycero-2,5-hexodiulosonate. The protein operates within glycan metabolism; pectin degradation; 2-dehydro-3-deoxy-D-gluconate from pectin: step 4/5. Its function is as follows. Catalyzes the isomerization of 5-dehydro-4-deoxy-D-glucuronate to 3-deoxy-D-glycero-2,5-hexodiulosonate. This chain is 4-deoxy-L-threo-5-hexosulose-uronate ketol-isomerase, found in Yersinia enterocolitica serotype O:8 / biotype 1B (strain NCTC 13174 / 8081).